Reading from the N-terminus, the 342-residue chain is GTPase Obg (342 aa).

Positions M1–I159 constitute an Obg domain. The OBG-type G domain maps to A160–D327. GTP-binding positions include G166–S173, F191–H195, D212–G215, S279–D282, and S308–A310. Mg(2+) contacts are provided by S173 and T193.

Belongs to the TRAFAC class OBG-HflX-like GTPase superfamily. OBG GTPase family. As to quaternary structure, monomer. It depends on Mg(2+) as a cofactor.

It is found in the cytoplasm. Functionally, an essential GTPase which binds GTP, GDP and possibly (p)ppGpp with moderate affinity, with high nucleotide exchange rates and a fairly low GTP hydrolysis rate. Plays a role in control of the cell cycle, stress response, ribosome biogenesis and in those bacteria that undergo differentiation, in morphogenesis control. The polypeptide is GTPase Obg (Methylobacterium nodulans (strain LMG 21967 / CNCM I-2342 / ORS 2060)).